Reading from the N-terminus, the 1435-residue chain is Nitric oxide synthase 1 (1435 aa).

An interaction with NOSIP region spans residues 1–206 (MEEHVFGVQQ…LQGSGDKNEL (206 aa)). The PDZ domain maps to 17-99 (SVRLFKRKVG…ETHVVLILRG (83 aa)). Disordered regions lie at residues 110-201 (TFTG…QGSG) and 277-304 (NNPY…SKCP). Residues 164 to 246 (QGHGQEAGSP…TGVQVDRDFD (83 aa)) are interaction with DYNLL1/PIN. The span at 290–300 (GKQSPTKNGSP) shows a compositional bias: polar residues. Serine 340 is a (6R)-L-erythro-5,6,7,8-tetrahydrobiopterin binding site. Residue cysteine 421 participates in heme b binding. The L-arginine site is built by glutamine 484, tryptophan 593, tyrosine 594, and glutamate 598. (6R)-L-erythro-5,6,7,8-tetrahydrobiopterin contacts are provided by valine 683, tryptophan 684, and phenylalanine 697. Position 712 (tyrosine 712) interacts with heme b. The calmodulin-binding stretch occupies residues 731-751 (KRRAIGFKKLAEAVKFSAKLM). Positions 761–941 (ATILYATETG…AFRTWAKKVF (181 aa)) constitute a Flavodoxin-like domain. 8 residues coordinate FMN: threonine 767, glutamate 768, threonine 769, lysine 771, serine 772, serine 813, threonine 814, and glycine 818. Residues serine 853, serine 863, and serine 864 each carry the phosphoserine modification. Positions 892, 897, 899, 925, and 929 each coordinate FMN. The region spanning 996–1243 (KRVSAARLLS…VRGAPSFRLP (248 aa)) is the FAD-binding FR-type domain. NADP(+) is bound at residue arginine 1016. FAD contacts are provided by histidine 1038, arginine 1179, tyrosine 1180, tyrosine 1181, serine 1182, threonine 1197, and alanine 1199. An NADP(+)-binding site is contributed by serine 1202. Positions 1203, 1216, 1217, and 1218 each coordinate FAD. Positions 1257, 1290, 1319, 1320, 1326, 1328, 1330, 1363, 1404, and 1406 each coordinate NADP(+).

This sequence belongs to the NOS family. Homodimer. Interacts with DLG4; the interaction possibly being prevented by the association between NOS1 and CAPON. Forms a ternary complex with CAPON and RASD1. Forms a ternary complex with CAPON and SYN1. Interacts with ZDHHC23. Interacts with NOSIP; which may impair its synaptic location. Interacts with HTR4. Interacts with SLC6A4. Interacts with VAC14. Interacts (via N-terminal domain) with DLG4 (via N-terminal tandem pair of PDZ domains). Interacts with SLC6A4. Forms a complex with ASL, ASS1 and SLC7A1; the complex regulates cell-autonomous L-arginine synthesis and citrulline recycling while channeling extracellular L-arginine to nitric oxide synthesis pathway. Interacts with DMD; localizes NOS1 to sarcolemma in muscle cells. Interacts with DYNLL1; inhibits the nitric oxide synthase activity. Requires heme b as cofactor. It depends on FAD as a cofactor. The cofactor is FMN. (6R)-L-erythro-5,6,7,8-tetrahydrobiopterin serves as cofactor. Ubiquitinated; mediated by STUB1/CHIP in the presence of Hsp70 and Hsp40 (in vitro).

Its subcellular location is the cell membrane. It is found in the sarcolemma. The protein localises to the cell projection. The protein resides in the dendritic spine. It carries out the reaction 2 L-arginine + 3 NADPH + 4 O2 + H(+) = 2 L-citrulline + 2 nitric oxide + 3 NADP(+) + 4 H2O. Stimulated by calcium/calmodulin. Inhibited by DYNLL1 that prevents the dimerization of the protein. Inhibited by NOSIP. Its function is as follows. Produces nitric oxide (NO) which is a messenger molecule with diverse functions throughout the body. In the brain and peripheral nervous system, NO displays many properties of a neurotransmitter. Probably has nitrosylase activity and mediates cysteine S-nitrosylation of cytoplasmic target proteins such SRR. The sequence is that of Nitric oxide synthase 1 (NOS1) from Oryctolagus cuniculus (Rabbit).